A 346-amino-acid polypeptide reads, in one-letter code: G-protein coupled receptor homolog U12 (346 aa).

The Extracellular portion of the chain corresponds to 1–31 (MICYSFAKNVTFAFLIILQNFFSQHDEEYKY). The helical transmembrane segment at 32 to 56 (NYTCITPTVRKAQRLESVINGIMLT) threads the bilayer. Residues 57 to 83 (LILPVSTVVICTLLIYYKWTKQTITSP) lie on the Cytoplasmic side of the membrane. The helical transmembrane segment at 84 to 108 (YLITLFISDSLHSLTVLLLTLNREA) threads the bilayer. The Extracellular segment spans residues 109 to 115 (LTNLNQA). Residues 116-142 (LCQCVLFVYSASCTYSLCMLAVISTIR) form a helical membrane-spanning segment. Over 143-159 (YRTLQRRTLNDKNNNHI) the chain is Cytoplasmic. The helical transmembrane segment at 160 to 181 (KRNVGILFLSSAMCAIPAVLYV) threads the bilayer. Over 182-208 (QVEKKKGNYGKCNIHISTQKAYDLFIG) the chain is Extracellular. The helical transmembrane segment at 209–229 (IKIVYCFLWGIFPTVIFSYFY) threads the bilayer. The Cytoplasmic portion of the chain corresponds to 230–245 (VIFGKTLRALTQSKHN). The helical transmembrane segment at 246-272 (KTLSFISLLILSFLCIQIPNLLVMSVE) threads the bilayer. Topologically, residues 273–286 (IFFLYIANTSCLGT) are extracellular. The helical transmembrane segment at 287–310 (IQREIVQIISRLMPEIHCLSNPLV) threads the bilayer. At 311–346 (YAFTRTDFRLRFYDFIKCNLCNSSLKRKRNPLTIKN) the chain is on the cytoplasmic side.

It belongs to the G-protein coupled receptor 1 family.

The protein localises to the host cell membrane. This is G-protein coupled receptor homolog U12 (U12) from Homo sapiens (Human).